A 178-amino-acid chain; its full sequence is Large ribosomal subunit protein uL5 (178 aa).

The protein belongs to the universal ribosomal protein uL5 family. Part of the 50S ribosomal subunit; part of the 5S rRNA/L5/L18/L25 subcomplex. Contacts the 5S rRNA and the P site tRNA. Forms a bridge to the 30S subunit in the 70S ribosome.

Functionally, this is one of the proteins that bind and probably mediate the attachment of the 5S RNA into the large ribosomal subunit, where it forms part of the central protuberance. In the 70S ribosome it contacts protein S13 of the 30S subunit (bridge B1b), connecting the 2 subunits; this bridge is implicated in subunit movement. Contacts the P site tRNA; the 5S rRNA and some of its associated proteins might help stabilize positioning of ribosome-bound tRNAs. The chain is Large ribosomal subunit protein uL5 from Psychrobacter sp. (strain PRwf-1).